A 278-amino-acid polypeptide reads, in one-letter code: Envelope glycoprotein L (278 aa).

Residues 1 to 32 form the signal peptide; sequence MCRRPDCGFSFSPGPVILLWCCLLLSIVSSAA. The gL betaherpesvirus-type domain maps to 43–256; the sequence is VPAECPELTR…DKYYAGLPPE (214 aa). Residues Cys-154 and Cys-159 are joined by a disulfide bond.

It belongs to the herpesviridae glycoprotein L (gL) family. Betaherpesvirinae gL subfamily. In terms of assembly, interacts with glycoprotein H (gH); this interaction is necessary for the correct processing and cell surface expression of gH. Forms the envelope pentamer complex (PC) composed of gH, gL, UL128, UL130, and UL131A. The pentamer interacts with host NRP2. Forms the envelope trimer complex composed of gH, gL, and gO. The trimer interacts with host PDGFRA. The trimer also interacts with host EPHA2.

The protein localises to the virion membrane. It is found in the host cell membrane. The protein resides in the host Golgi apparatus. Its subcellular location is the host trans-Golgi network. Functionally, the heterodimer glycoprotein H-glycoprotein L is required for the fusion of viral and plasma membranes leading to virus entry into the host cell. Acts as a functional inhibitor of gH and maintains gH in an inhibited form. Upon binding to host integrins, gL dissociates from gH leading to activation of the viral fusion glycoproteins gB and gH. In human cytomegalovirus, forms two distincts complexes to mediate viral entry, a trimer and a pentamer at the surface of the virion envelope. The gH-gL-gO trimer is required for infection in fibroblasts by interacting with host PDGFRA, and in glioblastoma cells by interacting with host EPHA2. The gH-gL-UL128-UL130-UL131A pentamer is essential for viral entry in epithelial, endothelial and myeloid cells via interaction with host NRP2. In Human cytomegalovirus (strain 119) (HHV-5), this protein is Envelope glycoprotein L.